The following is a 171-amino-acid chain: Der GTPase-activating protein YihI (171 aa).

2 disordered regions span residues 1 to 99 (MKKP…QAEL) and 145 to 171 (LSYD…RGGN). Residues 20–30 (TREELNQEARD) show a composition bias toward basic and acidic residues. Positions 31–40 (RKRLKKHRGH) are enriched in basic residues. Residues 147-160 (YDDDDEDDEEDEKQ) are compositionally biased toward acidic residues.

Belongs to the YihI family. In terms of assembly, interacts with Der.

Functionally, a GTPase-activating protein (GAP) that modifies Der/EngA GTPase function. May play a role in ribosome biogenesis. The chain is Der GTPase-activating protein YihI from Salmonella choleraesuis (strain SC-B67).